A 95-amino-acid polypeptide reads, in one-letter code: Corticostatin-3 (95 aa).

A signal peptide spans Met-1–Ala-19. A propeptide spanning residues Glu-20–Gly-62 is cleaved from the precursor. Cystine bridges form between Cys-65–Cys-93, Cys-67–Cys-82, and Cys-72–Cys-92.

It belongs to the alpha-defensin family.

It is found in the secreted. In terms of biological role, this peptide has antibiotic, anti-fungi and antiviral activity. It also inhibits corticotropin (ACTH) stimulated corticosterone production. The polypeptide is Corticostatin-3 (Oryctolagus cuniculus (Rabbit)).